We begin with the raw amino-acid sequence, 103 residues long: Small ribosomal subunit protein uS10 (103 aa).

The protein belongs to the universal ribosomal protein uS10 family. As to quaternary structure, part of the 30S ribosomal subunit.

In terms of biological role, involved in the binding of tRNA to the ribosomes. The chain is Small ribosomal subunit protein uS10 from Tolumonas auensis (strain DSM 9187 / NBRC 110442 / TA 4).